The following is a 91-amino-acid chain: Envelope glycoprotein N (91 aa).

The signal sequence occupies residues 1-23 (MGPPRRVCRAGLLFVLLVALAAG). The disordered stretch occupies residues 23 to 48 (GDAGPRGEPPGEEGGRDGIGGARCET). At 24 to 55 (DAGPRGEPPGEEGGRDGIGGARCETQNTGQMS) the chain is on the virion surface side. The chain crosses the membrane as a helical span at residues 56–76 (APGALVPFYVGMASMGVCIIA). At 77–91 (HVCQICQRLLAAGHA) the chain is on the intravirion side.

Belongs to the herpesviridae glycoprotein N family. In terms of assembly, interacts (via N-terminus) with gM (via N-terminus). The gM-gN heterodimer forms the gCII complex.

The protein resides in the virion membrane. It is found in the host membrane. The protein localises to the host Golgi apparatus. Its subcellular location is the host trans-Golgi network. Its function is as follows. Envelope glycoprotein necessary for proper maturation of gM and modulation of its membrane fusion activity. Also plays a critical role in virion morphogenesis. In Homo sapiens (Human), this protein is Envelope glycoprotein N.